Reading from the N-terminus, the 103-residue chain is Transcription factor S (103 aa).

Residues Cys4, Cys7, Cys20, Cys23, Cys64, Cys67, Cys92, and Cys95 each contribute to the Zn(2+) site. The C4-type zinc finger occupies 4–23; sequence CPKCKSLMIYQGDKLVCRKC. The TFIIS-type zinc finger occupies 60–100; sequence TKAICPACGHNEAFWWLRQLRAADESEVRFFRCTKCGKTWR.

This sequence belongs to the archaeal RpoM/eukaryotic RPA12/RPB9/RPC11 RNA polymerase family.

Induces RNA cleavage activity in the RNA polymerase. In its presence, the cleavage activity of the RNA polymerase truncates the RNA back to position +15 in a stepwise manner by releasing mainly dinucleotides from the 3'-end of the nascent RNA. The truncated RNAs are able to continue elongation. Involved in transcriptional proofreading and fidelity. Misincorporation of nucleotides during elongation of transcription leads to arrested elongation complexes which are rescued by TFS-promoted removal of a dinucleotide from the 3'-end. TFS is able to induce a cleavage resynthesis cycle in stalled elongation complexes (resulting from the next missing nucleotide or a reduced incorporation rate of a wrong nucleotide) preventing misincorporation and enabling proofreading in a post-incorporation manner. Pausing of elongation complexes is the main determinant of TFS-induced RNA cleavage. The polypeptide is Transcription factor S (Archaeoglobus fulgidus (strain ATCC 49558 / DSM 4304 / JCM 9628 / NBRC 100126 / VC-16)).